The chain runs to 62 residues: Sperm protamine P1 (62 aa).

The segment at 1 to 46 (MARCRRHSRSRSRSRNQCQRRRRRHYNRRRTYRRSRRHSRRRRVRR) is disordered.

The protein belongs to the protamine P1 family. As to expression, testis.

Its subcellular location is the nucleus. The protein resides in the chromosome. In terms of biological role, protamines substitute for histones in the chromatin of sperm during the haploid phase of spermatogenesis. They compact sperm DNA into a highly condensed, stable and inactive complex. In Planigale gilesi (Flat-skulled marsupial mouse), this protein is Sperm protamine P1 (PRM1).